We begin with the raw amino-acid sequence, 907 residues long: Protein translocase subunit SecA (907 aa).

Residues Gln87, 105–109 (GEGKT), and Asp512 each bind ATP. The interval 862-885 (AENQLDDGHSSDQNHSPMVRDERK) is disordered. Over residues 867 to 885 (DDGHSSDQNHSPMVRDERK) the composition is skewed to basic and acidic residues. Residues Cys892, Cys894, Cys903, and His904 each contribute to the Zn(2+) site.

This sequence belongs to the SecA family. Monomer and homodimer. Part of the essential Sec protein translocation apparatus which comprises SecA, SecYEG and auxiliary proteins SecDF-YajC and YidC. Requires Zn(2+) as cofactor.

Its subcellular location is the cell inner membrane. The protein localises to the cytoplasm. The catalysed reaction is ATP + H2O + cellular proteinSide 1 = ADP + phosphate + cellular proteinSide 2.. Part of the Sec protein translocase complex. Interacts with the SecYEG preprotein conducting channel. Has a central role in coupling the hydrolysis of ATP to the transfer of proteins into and across the cell membrane, serving both as a receptor for the preprotein-SecB complex and as an ATP-driven molecular motor driving the stepwise translocation of polypeptide chains across the membrane. The protein is Protein translocase subunit SecA of Aliivibrio salmonicida (strain LFI1238) (Vibrio salmonicida (strain LFI1238)).